The following is a 139-amino-acid chain: Large-conductance mechanosensitive channel (139 aa).

2 helical membrane-spanning segments follow: residues 9–29 (AFAV…GAAF) and 79–99 (IQSV…VKAI).

Belongs to the MscL family. As to quaternary structure, homopentamer.

It localises to the cell inner membrane. Its function is as follows. Channel that opens in response to stretch forces in the membrane lipid bilayer. May participate in the regulation of osmotic pressure changes within the cell. The polypeptide is Large-conductance mechanosensitive channel (Pseudomonas fluorescens (strain SBW25)).